The following is a 298-amino-acid chain: Glycine--tRNA ligase alpha subunit (298 aa).

Belongs to the class-II aminoacyl-tRNA synthetase family. As to quaternary structure, tetramer of two alpha and two beta subunits.

Its subcellular location is the cytoplasm. It carries out the reaction tRNA(Gly) + glycine + ATP = glycyl-tRNA(Gly) + AMP + diphosphate. The chain is Glycine--tRNA ligase alpha subunit from Helicobacter pylori (strain HPAG1).